Reading from the N-terminus, the 564-residue chain is 4-coumarate--CoA ligase 1 (564 aa).

ATP-binding residues include Ser-209, Ser-210, Gly-211, Thr-212, Thr-213, and Lys-217. Residues Tyr-259 and Thr-263 each coordinate (E)-4-coumaroyl-AMP. Arg-280 provides a ligand contact to CoA. The tract at residues 282–351 (DLAAMMDLVE…AKLPGAVLGQ (70 aa)) is SBD1. Residues Ala-329, Gln-351, Gly-352, Thr-356, and Met-364 each coordinate (E)-4-coumaroyl-AMP. Residues Gln-351, Gly-352, and Thr-356 each contribute to the ATP site. Positions 352–419 (GYGMTEAGPV…IRGQQIMKGY (68 aa)) are SBD2. Residues Asp-440 and Arg-455 each contribute to the ATP site. Lys-457 and Lys-461 together coordinate (E)-4-coumaroyl-AMP. The CoA site is built by Arg-463 and Gly-464. Lys-547 contacts ATP.

Belongs to the ATP-dependent AMP-binding enzyme family. Mg(2+) serves as cofactor. In terms of tissue distribution, expressed in roots, stems, leaf blades and leaf sheaths.

The enzyme catalyses (E)-ferulate + ATP + CoA = (E)-feruloyl-CoA + AMP + diphosphate. It carries out the reaction (E)-4-coumarate + ATP + CoA = (E)-4-coumaroyl-CoA + AMP + diphosphate. It catalyses the reaction (E)-cinnamate + ATP + CoA = (E)-cinnamoyl-CoA + AMP + diphosphate. The catalysed reaction is (E)-caffeate + ATP + CoA = (E)-caffeoyl-CoA + AMP + diphosphate. The enzyme catalyses (E)-ferulate + ATP + H(+) = (E)-feruloyl-AMP + diphosphate. It carries out the reaction (E)-feruloyl-AMP + CoA = (E)-feruloyl-CoA + AMP + H(+). It catalyses the reaction (E)-4-coumarate + ATP + H(+) = (E)-4-coumaroyl-AMP + diphosphate. The catalysed reaction is (E)-4-coumaroyl-AMP + CoA = (E)-4-coumaroyl-CoA + AMP + H(+). The enzyme catalyses (E)-caffeate + ATP + H(+) = (E)-caffeoyl-AMP + diphosphate. It carries out the reaction (E)-caffeoyl-AMP + CoA = (E)-caffeoyl-CoA + AMP + H(+). Its pathway is phytoalexin biosynthesis; 3,4',5-trihydroxystilbene biosynthesis; 3,4',5-trihydroxystilbene from trans-4-coumarate: step 1/2. Involved in the phenylpropanoid metabolism by mediating the activation of a number of hydroxycinnamates for the biosynthesis of monolignols and other phenolic secondary metabolites. Catalyzes the formation of CoA esters of cinnamate, 4-coumarate, caffeate and ferulate. Is more efficient with substrates in the following order: ferulate &gt; 4-coumarate &gt; cinnamate &gt; caffeate. Cannot convert sinapate to its corresponding CoA ester. Follows a two-step reaction mechanism, wherein the carboxylate substrate first undergoes adenylation by ATP, followed by a thioesterification in the presence of CoA to yield the final CoA thioester. The chain is 4-coumarate--CoA ligase 1 from Oryza sativa subsp. japonica (Rice).